A 179-amino-acid polypeptide reads, in one-letter code: Peptidyl-tRNA hydrolase 2, mitochondrial (179 aa).

The chain crosses the membrane as a helical span at residues Tyr-10–Gly-32. Glycyl lysine isopeptide (Lys-Gly) (interchain with G-Cter in ubiquitin) cross-links involve residues Lys-76, Lys-81, Lys-95, Lys-106, Lys-115, Lys-171, and Lys-177.

It belongs to the PTH2 family. Monomer. In terms of processing, ubiquitinated by PRKN during mitophagy, leading to its degradation and enhancement of mitophagy. Deubiquitinated by USP30.

It is found in the mitochondrion outer membrane. It catalyses the reaction an N-acyl-L-alpha-aminoacyl-tRNA + H2O = an N-acyl-L-amino acid + a tRNA + H(+). Peptidyl-tRNA hydrolase which releases tRNAs from the ribosome during protein synthesis. Promotes caspase-independent apoptosis by regulating the function of two transcriptional regulators, AES and TLE1. The polypeptide is Peptidyl-tRNA hydrolase 2, mitochondrial (PTRH2) (Bos taurus (Bovine)).